Here is a 188-residue protein sequence, read N- to C-terminus: Elongation factor P (188 aa).

This sequence belongs to the elongation factor P family.

The protein resides in the cytoplasm. It functions in the pathway protein biosynthesis; polypeptide chain elongation. Involved in peptide bond synthesis. Stimulates efficient translation and peptide-bond synthesis on native or reconstituted 70S ribosomes in vitro. Probably functions indirectly by altering the affinity of the ribosome for aminoacyl-tRNA, thus increasing their reactivity as acceptors for peptidyl transferase. This chain is Elongation factor P, found in Methylorubrum extorquens (strain CM4 / NCIMB 13688) (Methylobacterium extorquens).